Here is a 420-residue protein sequence, read N- to C-terminus: Uteroferrin-associated basic protein 2 (420 aa).

The first 25 residues, 1 to 25 (MSHGKMPLVLSLVLILCGLFNSISC), serve as a signal peptide directing secretion. 3 N-linked (GlcNAc...) asparagine glycosylation sites follow: Asn-225, Asn-271, and Asn-343.

Belongs to the serpin family. UTMP subfamily.

It is found in the secreted. It localises to the extracellular space. The protein is Uteroferrin-associated basic protein 2 of Sus scrofa (Pig).